The chain runs to 399 residues: S-adenosylmethionine synthase (399 aa).

His15 contributes to the ATP binding site. Asp17 contacts Mg(2+). A K(+)-binding site is contributed by Glu43. The L-methionine site is built by Glu56 and Gln99. The segment at 99–109 is flexible loop; the sequence is QSADIAQGVDN. ATP-binding positions include 174–176, 244–245, Asp253, 259–260, Ala276, and Lys280; these read DGK, RF, and RK. Residue Asp253 participates in L-methionine binding. Lys284 is an L-methionine binding site.

Belongs to the AdoMet synthase family. Homotetramer; dimer of dimers. The cofactor is Mg(2+). K(+) serves as cofactor.

The protein resides in the cytoplasm. The enzyme catalyses L-methionine + ATP + H2O = S-adenosyl-L-methionine + phosphate + diphosphate. The protein operates within amino-acid biosynthesis; S-adenosyl-L-methionine biosynthesis; S-adenosyl-L-methionine from L-methionine: step 1/1. Catalyzes the formation of S-adenosylmethionine (AdoMet) from methionine and ATP. The overall synthetic reaction is composed of two sequential steps, AdoMet formation and the subsequent tripolyphosphate hydrolysis which occurs prior to release of AdoMet from the enzyme. In Salinispora tropica (strain ATCC BAA-916 / DSM 44818 / JCM 13857 / NBRC 105044 / CNB-440), this protein is S-adenosylmethionine synthase.